The chain runs to 319 residues: Ribosomal RNA large subunit methyltransferase F (319 aa).

The disordered stretch occupies residues 1 to 25; the sequence is MAPFFSAMTSKKQSQGLPKGPHPDN. The span at 7–16 shows a compositional bias: polar residues; sequence AMTSKKQSQG.

This sequence belongs to the methyltransferase superfamily. METTL16/RlmF family.

The protein resides in the cytoplasm. It catalyses the reaction adenosine(1618) in 23S rRNA + S-adenosyl-L-methionine = N(6)-methyladenosine(1618) in 23S rRNA + S-adenosyl-L-homocysteine + H(+). Functionally, specifically methylates the adenine in position 1618 of 23S rRNA. The sequence is that of Ribosomal RNA large subunit methyltransferase F from Shewanella amazonensis (strain ATCC BAA-1098 / SB2B).